Reading from the N-terminus, the 693-residue chain is ATP-dependent DNA helicase RecG (693 aa).

The interval 48–146 is wedge domain; sequence THLYPIGELL…GDLSTPELQE (99 aa). In terms of domain architecture, Helicase ATP-binding spans 283-448; it reads DMALDVPMMR…AYADLDTSVI (166 aa). 296–303 contributes to the ATP binding site; the sequence is GDVGSGKT. Positions 397 to 400 match the DEAH box motif; the sequence is DEQH. In terms of domain architecture, Helicase C-terminal spans 482-628; sequence EGRQAYWVCT…GFVIAQKDLE (147 aa).

The protein belongs to the helicase family. RecG subfamily. Monomer.

The enzyme catalyses Couples ATP hydrolysis with the unwinding of duplex DNA by translocating in the 3'-5' direction.. It catalyses the reaction ATP + H2O = ADP + phosphate + H(+). Its function is as follows. Plays a critical role in recombination and DNA repair. Helps process Holliday junction intermediates to mature products by catalyzing branch migration. Has replication fork regression activity, unwinds stalled or blocked replication forks to make a HJ that can be resolved. Has a DNA unwinding activity characteristic of a DNA helicase with 3'-5' polarity. In terms of biological role, plays a role in recovery after DNA ADP-ribosylation. The protein is ATP-dependent DNA helicase RecG of Escherichia coli O127:H6 (strain E2348/69 / EPEC).